We begin with the raw amino-acid sequence, 100 residues long: Nucleoid-associated protein HPG27_32 (100 aa).

It belongs to the YbaB/EbfC family. Homodimer.

Its subcellular location is the cytoplasm. The protein resides in the nucleoid. Binds to DNA and alters its conformation. May be involved in regulation of gene expression, nucleoid organization and DNA protection. In Helicobacter pylori (strain G27), this protein is Nucleoid-associated protein HPG27_32.